The following is a 66-amino-acid chain: Large ribosomal subunit protein bL32 (66 aa).

Residues 1–18 are compositionally biased toward basic residues; that stretch reads MAIVPKRKTSKQRKHKRR. The tract at residues 1–21 is disordered; the sequence is MAIVPKRKTSKQRKHKRRTND.

It belongs to the bacterial ribosomal protein bL32 family.

This Mycoplasmopsis agalactiae (strain NCTC 10123 / CIP 59.7 / PG2) (Mycoplasma agalactiae) protein is Large ribosomal subunit protein bL32.